A 385-amino-acid polypeptide reads, in one-letter code: Cytochrome b (385 aa).

4 helical membrane-spanning segments follow: residues 34-54 (FGSL…LLTM), 78-99 (WFIR…FIHI), 114-134 (WYSG…GYVL), and 179-199 (FLVL…IHLV). The heme b site is built by histidine 84 and histidine 98. Positions 183 and 197 each coordinate heme b. Histidine 202 provides a ligand contact to a ubiquinone. The next 4 membrane-spanning stretches (helical) occupy residues 227-247 (FKDI…SLLL), 289-309 (LAGI…PILI), 321-341 (LMQV…WLGA), and 348-368 (FILM…VMFP).

It belongs to the cytochrome b family. As to quaternary structure, the cytochrome bc1 complex contains 3 respiratory subunits (MT-CYB, CYC1 and UQCRFS1), 2 core proteins (UQCRC1 and UQCRC2) and probably 6 low-molecular weight proteins. Heme b is required as a cofactor.

It is found in the mitochondrion inner membrane. Component of the ubiquinol-cytochrome c reductase complex (complex III or cytochrome b-c1 complex) that is part of the mitochondrial respiratory chain. The b-c1 complex mediates electron transfer from ubiquinol to cytochrome c. Contributes to the generation of a proton gradient across the mitochondrial membrane that is then used for ATP synthesis. The polypeptide is Cytochrome b (MT-CYB) (Eptatretus burgeri (Inshore hagfish)).